A 408-amino-acid chain; its full sequence is Cell division protein FtsZ 2 (408 aa).

GTP is bound by residues 130-132, Glu169, Arg173, and Asp216; that span reads GTG.

The protein belongs to the FtsZ family. In terms of assembly, homodimer. Polymerizes to form a dynamic ring structure in a strictly GTP-dependent manner. Interacts directly with several other division proteins.

The protein resides in the cytoplasm. Functionally, essential cell division protein that forms a contractile ring structure (Z ring) at the future cell division site. The regulation of the ring assembly controls the timing and the location of cell division. One of the functions of the FtsZ ring is to recruit other cell division proteins to the septum to produce a new cell wall between the dividing cells. Binds GTP and shows GTPase activity. The chain is Cell division protein FtsZ 2 from Pyrococcus furiosus (strain ATCC 43587 / DSM 3638 / JCM 8422 / Vc1).